The following is a 79-amino-acid chain: Apolipoprotein C-II (79 aa).

An N-terminal signal peptide occupies residues methionine 1–glycine 21. Residues glycine 45–isoleucine 52 are lipid binding. Residues serine 56–glutamine 79 form a lipoprotein lipase cofactor region.

Belongs to the apolipoprotein C2 family. In terms of processing, proapolipoprotein C-II is synthesized as a sialic acid containing glycoprotein which is subsequently desialylated prior to its proteolytic processing. Post-translationally, proapolipoprotein C-II, the major form found in plasma undergoes proteolytic cleavage of its N-terminal hexapeptide to generate apolipoprotein C-II, which occurs as the minor form in plasma.

Its subcellular location is the secreted. Its function is as follows. Component of chylomicrons, very low-density lipoproteins (VLDL), low-density lipoproteins (LDL), and high-density lipoproteins (HDL) in plasma. Plays an important role in lipoprotein metabolism as an activator of lipoprotein lipase. Both proapolipoprotein C-II and apolipoprotein C-II can activate lipoprotein lipase. This is Apolipoprotein C-II (APOC2) from Alligator mississippiensis (American alligator).